We begin with the raw amino-acid sequence, 497 residues long: Cysteine-rich secretory protein LCCL domain-containing 2 (497 aa).

The N-terminal stretch at 1–22 is a signal peptide; it reads MSCVLGGVIPLGLLFLVCGSQG. N-linked (GlcNAc...) asparagine glycosylation is present at Asn-27. In terms of domain architecture, SCP spans 62-200; it reads LHNKLRGQVQ…ENAVYFVCNY (139 aa). LCCL domains lie at 284–379 and 385–488; these read MTQV…SSSF and KVQD…RDGK. 4 disulfides stabilise this stretch: Cys-290–Cys-308, Cys-312–Cys-332, Cys-391–Cys-413, and Cys-417–Cys-440.

This sequence belongs to the CRISP family. In terms of assembly, binds to heparin, dermatan sulfate and chondroitin sulfate.

It localises to the secreted. Promotes matrix assembly. The chain is Cysteine-rich secretory protein LCCL domain-containing 2 (CRISPLD2) from Homo sapiens (Human).